A 337-amino-acid chain; its full sequence is D-alanine--D-alanine ligase (337 aa).

Residues 124 to 330 (KMWFSALGIP…FTEYLSLVIN (207 aa)) form the ATP-grasp domain. 154–209 (ALANWGSIFIKAASQGSSVGCYKVDDSSKVAQVLKDAFGYAPYVVVEKTIKARELE) contributes to the ATP binding site. The Mg(2+) site is built by aspartate 284, glutamate 297, and asparagine 299.

The protein belongs to the D-alanine--D-alanine ligase family. Requires Mg(2+) as cofactor. The cofactor is Mn(2+).

The protein resides in the cytoplasm. It catalyses the reaction 2 D-alanine + ATP = D-alanyl-D-alanine + ADP + phosphate + H(+). It participates in cell wall biogenesis; peptidoglycan biosynthesis. Its function is as follows. Cell wall formation. The sequence is that of D-alanine--D-alanine ligase from Shewanella putrefaciens (strain CN-32 / ATCC BAA-453).